The sequence spans 488 residues: Glutamyl-tRNA(Gln) amidotransferase subunit A (488 aa).

Residues Lys77 and Ser152 each act as charge relay system in the active site. The Acyl-ester intermediate role is filled by Ser176.

The protein belongs to the amidase family. GatA subfamily. As to quaternary structure, heterotrimer of A, B and C subunits.

It catalyses the reaction L-glutamyl-tRNA(Gln) + L-glutamine + ATP + H2O = L-glutaminyl-tRNA(Gln) + L-glutamate + ADP + phosphate + H(+). Functionally, allows the formation of correctly charged Gln-tRNA(Gln) through the transamidation of misacylated Glu-tRNA(Gln) in organisms which lack glutaminyl-tRNA synthetase. The reaction takes place in the presence of glutamine and ATP through an activated gamma-phospho-Glu-tRNA(Gln). The sequence is that of Glutamyl-tRNA(Gln) amidotransferase subunit A from Streptococcus pyogenes serotype M49 (strain NZ131).